We begin with the raw amino-acid sequence, 325 residues long: MKVSIIGSTGRVGRATALCLAEEEAVKTLHLISRRESLEQNIGEVLDMSDALAAKGVSVKLENSADIENVHGSRIVVITAGVPRTADMDRDDLAFQNGVIVAEYARQIARFAPDSIILVVTNPVDVMTYVALKYSGFHPSRVFGLGNHLDSLRLKNYMARHFNVHVSEVHTRVIGQHGPYMVPLISSTSIGGIPIEHYARRDYFSGYRRFDLKKTIEKVINAGSNIISRKGATEYGPAFAISNIVTTILNDERRILTVSTLMEGEIDGIRDVCLGVPVKLGKNGIEGVVPVLMDRDERETFREAASHVRNSTMKVMEFLDEELPL.

7-13 provides a ligand contact to NADP(+); it reads GSTGRVG. Substrate is bound by residues Arg-84 and Arg-90. NADP(+) contacts are provided by residues Asn-97 and 120–122; that span reads VTN. Positions 122 and 153 each coordinate substrate. The active-site Proton acceptor is the His-177.

It belongs to the LDH/MDH superfamily.

The enzyme catalyses (S)-malate + NADP(+) = oxaloacetate + NADPH + H(+). It carries out the reaction (S)-malate + NAD(+) = oxaloacetate + NADH + H(+). Catalyzes the reversible oxidation of malate to oxaloacetate. Can use NAD(+) and NADP(+) with similar specific activity. In Methanothermobacter marburgensis (strain ATCC BAA-927 / DSM 2133 / JCM 14651 / NBRC 100331 / OCM 82 / Marburg) (Methanobacterium thermoautotrophicum), this protein is Malate dehydrogenase.